The sequence spans 322 residues: Aldo-keto reductase family 1 member C13 (322 aa).

Residues 20 to 24 (GFGTY) and aspartate 50 contribute to the NAD(+) site. Tyrosine 55 functions as the Proton donor in the catalytic mechanism. Histidine 117 contacts substrate. Residues 166–167 (SN), glutamine 190, 216–224 (FGALGTQRY), and 270–280 (QSFYESEMKEN) each bind NAD(+).

Belongs to the aldo/keto reductase family. As to quaternary structure, monomer. The N-terminus is blocked.

The catalysed reaction is morphine + NAD(+) = morphinone + NADH + H(+). The enzyme catalyses morphine + NADP(+) = morphinone + NADPH + H(+). Strongly inhibited by sulfhydryl reagents and ketamine, but not by pyrazole, barbital and indomethacine. Functionally, catalyzes the dehydrogenation of morphine to morphinone. The enzyme also exhibits significant activity for a variety of cyclic and alicyclic alcohols. In addition to xenobiotics, the enzyme catalyzes the dehydrogenation of 17-beta-hydroxysteroids with much higher affinities than morphine. Uses both NAD and NADP, but the activity is much greater with NAD than with NADP. The polypeptide is Aldo-keto reductase family 1 member C13 (AKR1C13) (Mesocricetus auratus (Golden hamster)).